The chain runs to 391 residues: 8-amino-7-oxononanoate synthase (391 aa).

R19 provides a ligand contact to substrate. 106 to 107 (GY) serves as a coordination point for pyridoxal 5'-phosphate. Residue H131 participates in substrate binding. Residues S178, H206, and T234 each contribute to the pyridoxal 5'-phosphate site. The residue at position 237 (K237) is an N6-(pyridoxal phosphate)lysine. T353 serves as a coordination point for substrate.

The protein belongs to the class-II pyridoxal-phosphate-dependent aminotransferase family. BioF subfamily. As to quaternary structure, homodimer. The cofactor is pyridoxal 5'-phosphate.

It catalyses the reaction 6-carboxyhexanoyl-[ACP] + L-alanine + H(+) = (8S)-8-amino-7-oxononanoate + holo-[ACP] + CO2. It functions in the pathway cofactor biosynthesis; biotin biosynthesis. Catalyzes the decarboxylative condensation of pimeloyl-[acyl-carrier protein] and L-alanine to produce 8-amino-7-oxononanoate (AON), [acyl-carrier protein], and carbon dioxide. The chain is 8-amino-7-oxononanoate synthase from Pelobacter propionicus (strain DSM 2379 / NBRC 103807 / OttBd1).